The chain runs to 671 residues: Gametogenetin-binding protein 2-like (671 aa).

Disordered regions lie at residues 372 to 489 (REQK…ARVQ) and 532 to 562 (VRDS…SEVS). The span at 373 to 384 (EQKKLKKKKKKD) shows a compositional bias: basic residues. Positions 385–395 (EKKNLLHRQCD) are enriched in basic and acidic residues. A compositionally biased stretch (acidic residues) spans 396 to 420 (DTEANESDEEEEELRNEELDLEEES). Over residues 455 to 472 (TKSKPKKQSKKKKQKKAA) the composition is skewed to basic residues. Composition is skewed to polar residues over residues 476–486 (MGNQKQMQATA) and 546–557 (GSRTSSAISSPE).

In Drosophila melanogaster (Fruit fly), this protein is Gametogenetin-binding protein 2-like.